Reading from the N-terminus, the 561-residue chain is Carbohydrate sulfotransferase 15 (561 aa).

At Met-1–Cys-80 the chain is on the cytoplasmic side. The chain crosses the membrane as a helical; Signal-anchor for type II membrane protein span at residues Ser-81–Ala-101. Residues His-102 to Thr-561 are Lumenal-facing. Lys-263–Thr-267 is a binding site for 3'-phosphoadenylyl sulfate. Asn-364 is a glycosylation site (N-linked (GlcNAc...) asparagine). The 3'-phosphoadenylyl sulfate site is built by Arg-392 and Ser-400.

It belongs to the sulfotransferase 1 family. Homodimer; disulfide-linked (Potential). The relevance of homodimerization is however unsure. May interact with phosphorylated proteins in resting B-cells, including HCK. It depends on a divalent metal cation as a cofactor. Glutathione serves as cofactor. Post-translationally, glycosylated. In terms of tissue distribution, expressed in B-cell-enriched tissues but not in fetal or adult thymus. Expressed in fetal and adult spleen, lymph node, tonsil, bone marrow and peripheral leukocytes. Not expressed in T-cells. In pro-B, pre-B, and mature B-cell lines, it colocalizes with RAG1.

It localises to the golgi apparatus membrane. It carries out the reaction dermatan 4'-sulfate + n 3'-phosphoadenylyl sulfate = dermatan 4',6'-bissulfate + n adenosine 3',5'-bisphosphate + n H(+). The catalysed reaction is chondroitin 4'-sulfate + n 3'-phosphoadenylyl sulfate = chondroitin 4',6'-bissulfate + n adenosine 3',5'-bisphosphate + n H(+). Inhibited by phenyl beta-GalNAc(4,6-SO(4)). Sulfotransferase that transfers sulfate from 3'-phosphoadenosine 5'-phosphosulfate (PAPS) to the C-6 hydroxyl group of the GalNAc 4-sulfate residue of chondroitin sulfate A and forms chondroitin sulfate E containing GlcA-GalNAc(4,6-SO(4)) repeating units. It also transfers sulfate to a unique non-reducing terminal sequence, GalNAc(4SO4)-GlcA(2SO4)-GalNAc(6SO4), to yield a highly sulfated structure similar to the structure found in thrombomodulin chondroitin sulfate. May also act as a B-cell receptor involved in BCR ligation-mediated early activation that mediate regulatory signals key to B-cell development and/or regulation of B-cell-specific RAG expression; however such results are unclear in vivo. The sequence is that of Carbohydrate sulfotransferase 15 (CHST15) from Homo sapiens (Human).